The sequence spans 169 residues: Ribosome maturation factor RimM (169 aa).

The PRC barrel domain maps to glutamate 95–leucine 168.

This sequence belongs to the RimM family. Binds ribosomal protein uS19.

The protein resides in the cytoplasm. Functionally, an accessory protein needed during the final step in the assembly of 30S ribosomal subunit, possibly for assembly of the head region. Essential for efficient processing of 16S rRNA. May be needed both before and after RbfA during the maturation of 16S rRNA. It has affinity for free ribosomal 30S subunits but not for 70S ribosomes. This chain is Ribosome maturation factor RimM, found in Desulforamulus reducens (strain ATCC BAA-1160 / DSM 100696 / MI-1) (Desulfotomaculum reducens).